The sequence spans 347 residues: Dihydroorotase (347 aa).

The Zn(2+) site is built by His17 and His19. Residues 19 to 21 (HLR) and Asn45 contribute to the substrate site. 3 residues coordinate Zn(2+): Lys103, His140, and His178. Lys103 is subject to N6-carboxylysine. His140 serves as a coordination point for substrate. Leu223 provides a ligand contact to substrate. Asp251 contacts Zn(2+). The active site involves Asp251. Positions 255 and 267 each coordinate substrate.

The protein belongs to the metallo-dependent hydrolases superfamily. DHOase family. Class II DHOase subfamily. In terms of assembly, homodimer. Zn(2+) serves as cofactor.

The enzyme catalyses (S)-dihydroorotate + H2O = N-carbamoyl-L-aspartate + H(+). Its pathway is pyrimidine metabolism; UMP biosynthesis via de novo pathway; (S)-dihydroorotate from bicarbonate: step 3/3. Its function is as follows. Catalyzes the reversible cyclization of carbamoyl aspartate to dihydroorotate. This is Dihydroorotase from Citrobacter koseri (strain ATCC BAA-895 / CDC 4225-83 / SGSC4696).